A 187-amino-acid chain; its full sequence is Transcription antitermination protein NusB (187 aa).

A disordered region spans residues 135-187 (APAPESVAEEADEESSDSDAAASDPTDEGDVSDSSGASDEPAAPSAEIQPTVD). The segment covering 141 to 151 (VAEEADEESSD) has biased composition (acidic residues).

This sequence belongs to the NusB family.

Involved in transcription antitermination. Required for transcription of ribosomal RNA (rRNA) genes. Binds specifically to the boxA antiterminator sequence of the ribosomal RNA (rrn) operons. The protein is Transcription antitermination protein NusB of Bifidobacterium longum subsp. infantis (strain ATCC 15697 / DSM 20088 / JCM 1222 / NCTC 11817 / S12).